The chain runs to 207 residues: Large ribosomal subunit protein uL4 (207 aa).

The segment at 49-78 is disordered; that stretch reads HAVKNRSAVSGGGRKPWRQKGTGRARQGSI.

It belongs to the universal ribosomal protein uL4 family. In terms of assembly, part of the 50S ribosomal subunit.

Its function is as follows. One of the primary rRNA binding proteins, this protein initially binds near the 5'-end of the 23S rRNA. It is important during the early stages of 50S assembly. It makes multiple contacts with different domains of the 23S rRNA in the assembled 50S subunit and ribosome. In terms of biological role, forms part of the polypeptide exit tunnel. In Streptococcus pneumoniae serotype 2 (strain D39 / NCTC 7466), this protein is Large ribosomal subunit protein uL4.